A 1123-amino-acid chain; its full sequence is RNA-binding protein 6 (1123 aa).

2 disordered regions span residues 1–391 (MWGD…EGGL) and 413–454 (LPGS…EEKP). A Phosphoserine modification is found at Ser17. Lys36 is covalently cross-linked (Glycyl lysine isopeptide (Lys-Gly) (interchain with G-Cter in SUMO2)). Residues 79–97 (DGPHGDYRGGEGPGHDFRG) show a composition bias toward basic and acidic residues. Low complexity predominate over residues 98–114 (GDFSSSDFQSRDSSQLD). 2 stretches are compositionally biased toward basic and acidic residues: residues 115–131 (FRGRDIHSGDFRDREGP) and 145–237 (YRGR…DFRG). At Ser240 the chain carries Phosphoserine. Basic and acidic residues-rich tracts occupy residues 245–286 (LDFR…REMP) and 301–323 (QDREHSGMNVNRREESTHDHTIE). Residue Lys331 forms a Glycyl lysine isopeptide (Lys-Gly) (interchain with G-Cter in SUMO2) linkage. Over residues 332 to 354 (GEFEHSETREGETQGVAFEHESP) the composition is skewed to basic and acidic residues. A Phosphothreonine modification is found at Thr344. Positions 356–365 (DFQNSQSPVQ) are enriched in polar residues. Residues Ser360 and Ser362 each carry the phosphoserine modification. 2 stretches are compositionally biased toward basic and acidic residues: residues 366-391 (DQDKSQLSGREEQSSDAGLFKEEGGL) and 431-454 (KTARDAQRDLQDQDYRTGPSEEKP). Residues Lys386, Lys453, Lys469, and Lys569 each participate in a glycyl lysine isopeptide (Lys-Gly) (interchain with G-Cter in SUMO2) cross-link. The RRM domain occupies 456–536 (RLIRLSGVPE…KEVTLEYVSS (81 aa)). Disordered stretches follow at residues 574-654 (TYPQ…QDGE), 741-787 (KRRN…QSSS), and 827-948 (EEEI…EEDK). 2 stretches are compositionally biased toward basic and acidic residues: residues 597-654 (PADK…QDGE) and 742-754 (RRNDSGDHSDHMH). The segment covering 772 to 787 (SDWSSDTNRQGQQSSS) has biased composition (polar residues). Positions 843–860 (SKKEMSKRDGKEKKDRGV) are enriched in basic and acidic residues. Glycyl lysine isopeptide (Lys-Gly) (interchain with G-Cter in SUMO2) cross-links involve residues Lys871, Lys879, and Lys887. Position 891 is a phosphoserine (Ser891). Residues 910–922 (GDSDYEEEEEEEQ) are compositionally biased toward acidic residues. Residues 934–948 (QKREEQTKKENEEDK) are compositionally biased toward basic and acidic residues. Residues Lys935, Lys948, Lys991, and Lys1019 each participate in a glycyl lysine isopeptide (Lys-Gly) (interchain with G-Cter in SUMO2) cross-link. Residues 1004 to 1051 (EREGKFKGRGNDRREKLQSFDSPERKRIKYSRETDSDRKLVDKEDIDT) are compositionally biased toward basic and acidic residues. The tract at residues 1004 to 1106 (EREGKFKGRG…RTSKRQSNET (103 aa)) is disordered. Phosphoserine occurs at positions 1022 and 1025. Glycyl lysine isopeptide (Lys-Gly) (interchain with G-Cter in SUMO2) cross-links involve residues Lys1042, Lys1046, and Lys1066. The G-patch domain maps to 1051–1097 (TSSKGGCVQQATGWRKGTGLGYGHPGLASSEEAEGRMRGPSVGASGR).

As to quaternary structure, may interact with FAM168B. In terms of tissue distribution, ubiquitous in adults.

It is found in the nucleus. Specifically binds poly(G) RNA homopolymers in vitro. The polypeptide is RNA-binding protein 6 (RBM6) (Homo sapiens (Human)).